We begin with the raw amino-acid sequence, 438 residues long: Phosphoribosylamine--glycine ligase (438 aa).

Residues 108 to 316 (RTFMERNEIP…LLEVAEGIVD (209 aa)) form the ATP-grasp domain. An ATP-binding site is contributed by 135 to 194 (VDDFGRPVVVKPIGLTGGKGVKVVGYQLRDNEEAKSYAEELIRRDGRVLIEERTNGVEFT). Mg(2+)-binding residues include Gln274, Glu286, and Asn288. Residues Gln274, Glu286, and Asn288 each contribute to the Mn(2+) site.

It belongs to the GARS family. It depends on Mg(2+) as a cofactor. Mn(2+) serves as cofactor.

The catalysed reaction is 5-phospho-beta-D-ribosylamine + glycine + ATP = N(1)-(5-phospho-beta-D-ribosyl)glycinamide + ADP + phosphate + H(+). It participates in purine metabolism; IMP biosynthesis via de novo pathway; N(1)-(5-phospho-D-ribosyl)glycinamide from 5-phospho-alpha-D-ribose 1-diphosphate: step 2/2. This chain is Phosphoribosylamine--glycine ligase, found in Thermococcus gammatolerans (strain DSM 15229 / JCM 11827 / EJ3).